Here is a 987-residue protein sequence, read N- to C-terminus: MASPRSAGGVGGGGGGGGGSGGAAAGDDAIWSKLREAGFDEESLKRRDKAALIAYISRLESEIYQYQHNLGLVLMERKELTSKHEQLRAASESAEIMHKRERAAQQSALAEARKKEENLKKSLGIQKECVANLEKALHDMRGETAETKVSYESKLAEALQLMEAAHKKFDEAEEKLLLAKSLEAESIRTHNAALRSLHDIDDREDQLRRDRISCELENEAKEKEISLQRKSLNDMKKILHEKEEVLLKEQALLNQRDENILERLAYVTHSEKRVEEEKNILEAERKVLLEEKYKLELKMEAIVSREEALIQKESLLDKRESELLILQETIASKERAEIERLNQEQAIALERRKHDFESEMANKQMSFDAAMEVTRNALHQRECALSEQESVVVQRSQNLDLQLAELASKEKALAGRSDELKEEEEKLLLHREAIHNELQKEREEIQRIKSDLEKEKAFFEEEKREAIQAQQDLAITQADRDELLTLQMKLKEEIDSLRAQKRELMADADRLQAEKERFEIEWELIDEKKEELQKEAIRIAEERRAITEYLKNESDIIKQEKDNLRVQFKSNSETLSREHKEFMSKMQQEHASWLSKIQQERQDLKRDIDIQRVELLNSAKARQMEIDSYLREREEEFEQKKAKELEHINSQKEMINTKLEHVAVELQKLKDERKEATLERERREQELSEIKGTIEALNNQREKLQEQRKLLHSDREAITVQIQQLNVLEELKIDSENKQLSLLQHDKSKLGSDINVKDNHHDNSHSSPKQRFGRKLDLSPVSTPISWVRKCAQVIFKRSPEKSASHDQFVQNGVPKKVGDSVDVEDVNLDFAKVGQKRLNHLVSCDQTEVLEPKRKHRRSTIQKVNGGEITSNCLSALEEKCSKNEHDEAPLGLSNTCKEHEYGDKGPENLTKPGEPASSVDVPYVNGIVDNSDSVQEEPSVEATVSATETSNVDGPEDNNDSDEEDEEEEEEKTSSAKKLWRFLIT.

Positions 1–25 (MASPRSAGGVGGGGGGGGGSGGAAA) are disordered. Residues 8-24 (GGVGGGGGGGGGSGGAA) are compositionally biased toward gly residues. 2 coiled-coil regions span residues 403–545 (LAEL…ERRA) and 594–717 (LSKI…DREA). Composition is skewed to basic and acidic residues over residues 752-764 (SDIN…HDNS) and 898-908 (CKEHEYGDKGP). Disordered stretches follow at residues 752–775 (SDIN…FGRK) and 887–987 (HDEA…FLIT). Residues 944–954 (ATVSATETSNV) are compositionally biased toward polar residues. Residues 956-973 (GPEDNNDSDEEDEEEEEE) show a composition bias toward acidic residues.

The protein belongs to the CRWN family. As to quaternary structure, interacts with SWI3C.

It is found in the nucleus matrix. The protein resides in the nucleus lamina. Its function is as follows. Architectural component of nuclear structure that plays different roles in controlling nuclear size and morphology. Involved in the modification of chromatin accessibility by interacting with SWI3C, a component of the chromatin-remodeling complex, to thus reduce the suppression effect of the complex. Acts as positive regulator of drought resistance and modulates root growth. Positively regulates the expression of genes related to root growth and drought resistance. This chain is Nuclear matrix constituent protein 1b, found in Oryza sativa subsp. japonica (Rice).